The following is an 83-amino-acid chain: Small ribosomal subunit protein eS21 (83 aa).

The protein belongs to the eukaryotic ribosomal protein eS21 family. In terms of assembly, component of the 40S small ribosomal subunit.

It is found in the cytoplasm. It localises to the cytosol. The protein resides in the rough endoplasmic reticulum. Its function is as follows. Component of the small ribosomal subunit. The ribosome is a large ribonucleoprotein complex responsible for the synthesis of proteins in the cell. The protein is Small ribosomal subunit protein eS21 (rps21) of Ictalurus punctatus (Channel catfish).